Consider the following 1194-residue polypeptide: Chitin synthase C (1194 aa).

2 disordered regions span residues 1 to 91 (MSLP…PNYL) and 136 to 177 (GAHG…RRKA). Basic and acidic residues predominate over residues 12-23 (PRREETSAFREP). The span at 42-54 (PRHHRHHRSHSSR) shows a compositional bias: basic residues. Composition is skewed to basic and acidic residues over residues 55–69 (HQHD…EGGI) and 76–85 (VKPERGRMDP). Residues 150–164 (TRHRSKKRKGSRKIS) are compositionally biased toward basic residues. A helical membrane pass occupies residues 221–241 (IGLISIILMIAAFVGFLTFGF). N-linked (GlcNAc...) asparagine glycosylation is found at N351 and N390. Residues 476–496 (YVSLIFILSIVIVKFAFALLF) traverse the membrane as a helical segment. N-linked (GlcNAc...) asparagine glycosylation is found at N582, N608, N885, and N1014. The next 3 helical transmembrane spans lie at 1039 to 1059 (FVIF…SFTI), 1073 to 1093 (IIPL…VVVT), and 1097 to 1117 (LVYV…NFVL).

Belongs to the chitin synthase family. Class V subfamily.

It is found in the cell membrane. It catalyses the reaction [(1-&gt;4)-N-acetyl-beta-D-glucosaminyl](n) + UDP-N-acetyl-alpha-D-glucosamine = [(1-&gt;4)-N-acetyl-beta-D-glucosaminyl](n+1) + UDP + H(+). Polymerizes chitin, a structural polymer of the cell wall and septum, by transferring the sugar moiety of UDP-GlcNAc to the non-reducing end of the growing chitin polymer. Responsible for synthesis of 30-40% of the chitin in the cells. ChsA and chsD play redundant functions in conidia formation. The chitin synthesized by the chsD-encoded isozyme contributes to the rigidity of the walls of germinating conidia, of the subapical region of hyphae, and of conidiophore vesicles, but is not necessary for normal morphology of these cells. The protein is Chitin synthase C of Emericella nidulans (strain FGSC A4 / ATCC 38163 / CBS 112.46 / NRRL 194 / M139) (Aspergillus nidulans).